Reading from the N-terminus, the 197-residue chain is Neurturin (197 aa).

Residues 1–19 (MQRWKAAALASVLCSSVLS) form the signal peptide. Positions 20-95 (IWMCREGLLL…RAGPRRRRAR (76 aa)) are excised as a propeptide. The segment at 74-93 (TPWAGRPPGPRRRAGPRRRR) is disordered. Over residues 82–93 (GPRRRAGPRRRR) the composition is skewed to basic residues. Intrachain disulfides connect Cys103–Cys165, Cys130–Cys194, and Cys134–Cys196. Arg149, Arg158, Arg160, and Gln162 together coordinate heparan sulfate group.

The protein belongs to the TGF-beta family. GDNF subfamily. As to quaternary structure, homodimer; disulfide-linked. Interacts with GFRA2 coreceptor and RET: forms a 2:2:2 ternary complex composed of NRTN ligand, GFRA2 and RET receptor. Also forms a 4:4:4 tetrameric complex composed of 4 copies of NRTN ligand, GFRA2 and RET receptor, which prevents endocytosis of RET.

It localises to the secreted. Functionally, growth factor that supports the survival of sympathetic neurons in culture. May regulate the development and maintenance of the CNS. Involved in the development of the neural crest. Might control the size of non-neuronal cell population such as haemopoietic cells. Acts by binding to its coreceptor, GFRA2, leading to autophosphorylation and activation of the RET receptor. Heparan sulfate-binding is required for signaling. In Homo sapiens (Human), this protein is Neurturin.